A 118-amino-acid polypeptide reads, in one-letter code: Large ribosomal subunit protein bL20 (118 aa).

It belongs to the bacterial ribosomal protein bL20 family.

Functionally, binds directly to 23S ribosomal RNA and is necessary for the in vitro assembly process of the 50S ribosomal subunit. It is not involved in the protein synthesizing functions of that subunit. The chain is Large ribosomal subunit protein bL20 from Aliarcobacter butzleri (strain RM4018) (Arcobacter butzleri).